The following is an 87-amino-acid chain: MTKVLCKKYNEELDAIPFQPLPGELGKKIHSEISNKAWQAWLAHQTILINEYRLNLIEPKAKEFLKEEMQKFLFENKEDKPEQFNEI.

Belongs to the Fe(2+)-trafficking protein family.

In terms of biological role, could be a mediator in iron transactions between iron acquisition and iron-requiring processes, such as synthesis and/or repair of Fe-S clusters in biosynthetic enzymes. The protein is Probable Fe(2+)-trafficking protein of Francisella philomiragia subsp. philomiragia (strain ATCC 25017 / CCUG 19701 / FSC 153 / O#319-036).